Reading from the N-terminus, the 317-residue chain is 4-diphosphocytidyl-2-C-methyl-D-erythritol kinase (317 aa).

Residue Lys17 is part of the active site. 109 to 119 contacts ATP; that stretch reads PVAGGMGGGSA. Asp151 is an active-site residue.

The protein belongs to the GHMP kinase family. IspE subfamily.

It carries out the reaction 4-CDP-2-C-methyl-D-erythritol + ATP = 4-CDP-2-C-methyl-D-erythritol 2-phosphate + ADP + H(+). The protein operates within isoprenoid biosynthesis; isopentenyl diphosphate biosynthesis via DXP pathway; isopentenyl diphosphate from 1-deoxy-D-xylulose 5-phosphate: step 3/6. Functionally, catalyzes the phosphorylation of the position 2 hydroxy group of 4-diphosphocytidyl-2C-methyl-D-erythritol. In Paenarthrobacter aurescens (strain TC1), this protein is 4-diphosphocytidyl-2-C-methyl-D-erythritol kinase.